A 90-amino-acid polypeptide reads, in one-letter code: Hypnin-A3 (90 aa).

Its function is as follows. Lectin specific for core(alpha 1-6)fucosylated N-glycans. Inhibits platelet aggregation. This Hypnea japonica (Japanese red alga) protein is Hypnin-A3.